A 541-amino-acid chain; its full sequence is Chaperonin GroEL (541 aa).

ATP contacts are provided by residues 29–32 (TLGP), 86–90 (DGTTT), glycine 413, 476–478 (NAA), and aspartate 492.

This sequence belongs to the chaperonin (HSP60) family. Forms a cylinder of 14 subunits composed of two heptameric rings stacked back-to-back. Interacts with the co-chaperonin GroES.

Its subcellular location is the cytoplasm. It carries out the reaction ATP + H2O + a folded polypeptide = ADP + phosphate + an unfolded polypeptide.. In terms of biological role, together with its co-chaperonin GroES, plays an essential role in assisting protein folding. The GroEL-GroES system forms a nano-cage that allows encapsulation of the non-native substrate proteins and provides a physical environment optimized to promote and accelerate protein folding. The sequence is that of Chaperonin GroEL from Rhodococcus hoagii (Corynebacterium equii).